The following is a 142-amino-acid chain: Hemoglobin subunit pi (142 aa).

In terms of domain architecture, Globin spans 2–142 (ALTQAEKAAV…ISSVLTEKYR (141 aa)). Heme b is bound by residues histidine 59 and histidine 88.

Belongs to the globin family.

Functionally, the pi' chain is the counterpart of the alpha chain in the major early embryonic hemoglobin P. This chain is Hemoglobin subunit pi, found in Gallus gallus (Chicken).